Here is a 358-residue protein sequence, read N- to C-terminus: Biotin synthase (358 aa).

Residues 44 to 272 enclose the Radical SAM core domain; that stretch reads NRVRLNYLVN…DSEVRAAAGR (229 aa). Cysteine 59, cysteine 63, and cysteine 66 together coordinate [4Fe-4S] cluster. Positions 103, 136, 196, and 267 each coordinate [2Fe-2S] cluster.

Belongs to the radical SAM superfamily. Biotin synthase family. Homodimer. [4Fe-4S] cluster serves as cofactor. [2Fe-2S] cluster is required as a cofactor.

The enzyme catalyses (4R,5S)-dethiobiotin + (sulfur carrier)-SH + 2 reduced [2Fe-2S]-[ferredoxin] + 2 S-adenosyl-L-methionine = (sulfur carrier)-H + biotin + 2 5'-deoxyadenosine + 2 L-methionine + 2 oxidized [2Fe-2S]-[ferredoxin]. It functions in the pathway cofactor biosynthesis; biotin biosynthesis; biotin from 7,8-diaminononanoate: step 2/2. In terms of biological role, catalyzes the conversion of dethiobiotin (DTB) to biotin by the insertion of a sulfur atom into dethiobiotin via a radical-based mechanism. This chain is Biotin synthase, found in Cutibacterium acnes (strain DSM 16379 / KPA171202) (Propionibacterium acnes).